Consider the following 609-residue polypeptide: Phosphoenolpyruvate carboxykinase [GTP] (609 aa).

Residues Arg-81 and 220 to 222 contribute to the substrate site; that span reads YGG. Mn(2+) contacts are provided by Lys-229 and His-249. Ser-271 lines the substrate pocket. 272–277 lines the GTP pocket; that stretch reads ACGKTN. The active site involves Cys-273. Asp-296 contributes to the Mn(2+) binding site. A substrate-binding site is contributed by 387 to 389; it reads NSR. GTP contacts are provided by residues Arg-389, Arg-420, and 515-518; that span reads FGEN.

The protein belongs to the phosphoenolpyruvate carboxykinase [GTP] family. In terms of assembly, monomer. The cofactor is Mn(2+).

The protein resides in the cytoplasm. The catalysed reaction is oxaloacetate + GTP = phosphoenolpyruvate + GDP + CO2. Its pathway is carbohydrate biosynthesis; gluconeogenesis. Its function is as follows. Catalyzes the conversion of oxaloacetate (OAA) to phosphoenolpyruvate (PEP), the rate-limiting step in the metabolic pathway that produces glucose from lactate and other precursors derived from the citric acid cycle. This Mycolicibacterium paratuberculosis (strain ATCC BAA-968 / K-10) (Mycobacterium paratuberculosis) protein is Phosphoenolpyruvate carboxykinase [GTP].